The chain runs to 194 residues: Putative 3-methyladenine DNA glycosylase (194 aa).

This sequence belongs to the DNA glycosylase MPG family.

This chain is Putative 3-methyladenine DNA glycosylase, found in Myxococcus xanthus (strain DK1622).